A 170-amino-acid chain; its full sequence is Adenine phosphoribosyltransferase (170 aa).

It belongs to the purine/pyrimidine phosphoribosyltransferase family. As to quaternary structure, homodimer.

It localises to the cytoplasm. The catalysed reaction is AMP + diphosphate = 5-phospho-alpha-D-ribose 1-diphosphate + adenine. It functions in the pathway purine metabolism; AMP biosynthesis via salvage pathway; AMP from adenine: step 1/1. Catalyzes a salvage reaction resulting in the formation of AMP, that is energically less costly than de novo synthesis. In Fervidobacterium nodosum (strain ATCC 35602 / DSM 5306 / Rt17-B1), this protein is Adenine phosphoribosyltransferase.